Here is a 239-residue protein sequence, read N- to C-terminus: Ribosomal RNA small subunit methyltransferase G (239 aa).

Residues Gly95, Leu100, 118–120, 146–147, and Arg164 contribute to the S-adenosyl-L-methionine site; these read EAT and AE.

The protein belongs to the methyltransferase superfamily. RNA methyltransferase RsmG family.

The protein resides in the cytoplasm. The catalysed reaction is guanosine(527) in 16S rRNA + S-adenosyl-L-methionine = N(7)-methylguanosine(527) in 16S rRNA + S-adenosyl-L-homocysteine. Functionally, specifically methylates the N7 position of guanine in position 527 of 16S rRNA. In Sorangium cellulosum (strain So ce56) (Polyangium cellulosum (strain So ce56)), this protein is Ribosomal RNA small subunit methyltransferase G.